Here is a 456-residue protein sequence, read N- to C-terminus: uncharacterized protein (456 aa).

The TRAM domain maps to 3 to 61; sequence TIKKNEVKTGKVIDLTHEGHGVVKVDRYPIFIPNALIDEEIKFKLIKVKKNFAIGKLIE. Residues C74, C80, C83, and C162 each contribute to the [4Fe-4S] cluster site. Residues Q286, Y315, E336, and D384 each contribute to the S-adenosyl-L-methionine site. C411 acts as the Nucleophile in catalysis.

It belongs to the class I-like SAM-binding methyltransferase superfamily. RNA M5U methyltransferase family.

This is an uncharacterized protein from Staphylococcus epidermidis (strain ATCC 35984 / DSM 28319 / BCRC 17069 / CCUG 31568 / BM 3577 / RP62A).